The primary structure comprises 639 residues: uncharacterized protein (639 aa).

The N-terminal stretch at 1 to 16 (MLTLYLFTATCCFVCA) is a signal peptide. Disordered stretches follow at residues 80–128 (RRRA…SDKL) and 432–488 (QTAT…TSRT). Composition is skewed to polar residues over residues 108-122 (TYAT…TASP) and 432-446 (QTAT…QQQP). Residues 465–480 (HGDEPHSDGELRRESH) are compositionally biased toward basic and acidic residues.

This is an uncharacterized protein from Human cytomegalovirus (strain Merlin) (HHV-5).